Consider the following 82-residue polypeptide: MKTYAVLLALVVAFVCIAESTGYPVEDLEDDELTELEAEALLEDLLEDLELEDLDYNEEARSWASMAKKLKEYMEKLKQRAG.

An N-terminal signal peptide occupies residues 1–22; it reads MKTYAVLLALVVAFVCIAESTG. A propeptide spanning residues 23–61 is cleaved from the precursor; it reads YPVEDLEDDELTELEAEALLEDLLEDLELEDLDYNEEAR. The Processing quadruplet motif signature appears at 58-61; sequence EEAR. Residue Ala81 is modified to Alanine amide.

In terms of processing, cleavage of the propeptide depends on the processing quadruplet motif (XXXR, with at least one of X being E). Expressed by the venom gland.

The protein localises to the secreted. In terms of biological role, it has antimicrobial activity against Gram-positive bacteria (A.globiformis VKM Ac-1112 (MIC=0.7 uM), and B.subtilis VKM B-501 (MIC=2.9 uM)), Gram-negative bacteria (E.coli DH5-alpha (MIC=23 uM), E.coli MH1 (MIC=28 uM), and P.aeruginosa PAO1 (MIC&gt;45 uM)), and yeasts (P.pastoris GS115 (MIC=23 uM), and S.cerevisiae Y190 (MIC=23 uM)). Does not have hemolytic against rabbit erythrocytes. Causes paralysis, but is not lethal when injected into insect (M.domestica) larvae. This is M-zodatoxin-Lt3b from Lachesana tarabaevi (Spider).